Reading from the N-terminus, the 239-residue chain is Sugar fermentation stimulation protein homolog (239 aa).

This sequence belongs to the SfsA family.

This is Sugar fermentation stimulation protein homolog from Microcystis aeruginosa (strain NIES-843 / IAM M-2473).